Here is a 211-residue protein sequence, read N- to C-terminus: Wound-induced protein WIN2 (211 aa).

Residues 1 to 25 (MVKLSCGPILLALVLCISLTSVANA) form the signal peptide. The Chitin-binding type-1 domain occupies 26-68 (QQCGRQRGGALCGNNLCCSQFGWCGSTPEYCSPSQGCQSQCTG). 4 disulfides stabilise this stretch: Cys-28-Cys-43, Cys-37-Cys-49, Cys-42-Cys-56, and Cys-62-Cys-66. Residues 77–198 (GSAQNVRATY…VNYQFVNCGD (122 aa)) enclose the Barwin domain.

This is Wound-induced protein WIN2 (WIN2) from Solanum tuberosum (Potato).